We begin with the raw amino-acid sequence, 610 residues long: Pyruvate decarboxylase 1 (610 aa).

The substrate site is built by Asp-72 and His-159. The tract at residues 437–519 is thiamine pyrophosphate binding; the sequence is DSWFNCQKLR…FLINNGGYTI (83 aa). Residues Asp-487, Asn-514, and Gly-516 each coordinate Mg(2+). Glu-520 is a binding site for substrate.

The protein belongs to the TPP enzyme family. Homotetramer. The cofactor is a metal cation. Thiamine diphosphate is required as a cofactor.

It carries out the reaction a 2-oxocarboxylate + H(+) = an aldehyde + CO2. This Zea mays (Maize) protein is Pyruvate decarboxylase 1 (PDC1).